The primary structure comprises 316 residues: Retinol dehydrogenase 11 (316 aa).

Residues methionine 1–isoleucine 21 traverse the membrane as a helical; Signal-anchor for type II membrane protein segment. Topologically, residues arginine 22–tryptophan 316 are cytoplasmic. Glycine 45 to glycine 51 is an NADP(+) binding site. Position 109 is an N6-acetyllysine (lysine 109). A substrate-binding site is contributed by serine 174. The active-site Proton acceptor is the tyrosine 199.

Belongs to the short-chain dehydrogenases/reductases (SDR) family. Not glycosylated. In terms of tissue distribution, expressed at high level in liver and testis. Expressed at lower levels in smooth muscle, thymus, submaxillary gland and epididymis. In testis, expression is restricted to pachytene spermatocytes. Also expressed in four layers of the retina, including the outer segment of rods and cones.

It is found in the endoplasmic reticulum membrane. It carries out the reaction all-trans-retinol + NADP(+) = all-trans-retinal + NADPH + H(+). The catalysed reaction is 11-cis-retinol + NADP(+) = 11-cis-retinal + NADPH + H(+). The enzyme catalyses 9-cis-retinol + NADP(+) = 9-cis-retinal + NADPH + H(+). It catalyses the reaction 13-cis-retinol + NADP(+) = 13-cis-retinal + NADPH + H(+). It carries out the reaction a medium-chain primary fatty alcohol + NADP(+) = a medium-chain fatty aldehyde + NADPH + H(+). The catalysed reaction is (2E,6Z)-nona-2,6-dien-1-ol + NADP(+) = (2E,6Z)-nona-2,6-dienal + NADPH + H(+). The enzyme catalyses (E)-oct-2-en-1-ol + NADP(+) = (2E)-octenal + NADPH + H(+). It catalyses the reaction (E)-non-2-en-1-ol + NADP(+) = (E)-non-2-enal + NADPH + H(+). It carries out the reaction heptan-1-ol + NADP(+) = heptanal + NADPH + H(+). The catalysed reaction is hexan-1-ol + NADP(+) = hexanal + NADPH + H(+). The enzyme catalyses decan-1-ol + NADP(+) = decanal + NADPH + H(+). It catalyses the reaction nonan-1-ol + NADP(+) = nonanal + NADPH + H(+). It carries out the reaction octan-1-ol + NADP(+) = octanal + NADPH + H(+). The catalysed reaction is (Z)-non-6-en-1-ol + NADP(+) = (Z)-non-6-enal + NADPH + H(+). The protein operates within cofactor metabolism; retinol metabolism. Retinol dehydrogenase with a clear preference for NADP. Displays high activity towards 9-cis, 11-cis and all-trans-retinol, and to a lesser extent on 13-cis-retinol. Also exhibits reductive activity towards toxic lipid peroxidation products such as medium-chain aldehydes trans-2-nonenal, nonanal, and cis-6-nonenal. Has no dehydrogenase activity towards steroid. Seems to be required for homeostasis of retinol in liver and testis. In Mus musculus (Mouse), this protein is Retinol dehydrogenase 11 (Rdh11).